A 677-amino-acid chain; its full sequence is Methionine--tRNA ligase (677 aa).

Positions Pro15–His25 match the 'HIGH' region motif. Cys146, Cys149, Cys159, and Cys162 together coordinate Zn(2+). Positions Lys333–Ser337 match the 'KMSKS' region motif. Residue Lys336 participates in ATP binding. The region spanning Asp575–Lys677 is the tRNA-binding domain.

This sequence belongs to the class-I aminoacyl-tRNA synthetase family. MetG type 1 subfamily. In terms of assembly, homodimer. It depends on Zn(2+) as a cofactor.

The protein localises to the cytoplasm. It catalyses the reaction tRNA(Met) + L-methionine + ATP = L-methionyl-tRNA(Met) + AMP + diphosphate. Its function is as follows. Is required not only for elongation of protein synthesis but also for the initiation of all mRNA translation through initiator tRNA(fMet) aminoacylation. This Escherichia coli (strain SE11) protein is Methionine--tRNA ligase.